We begin with the raw amino-acid sequence, 100 residues long: Large ribosomal subunit protein uL23 (100 aa).

It belongs to the universal ribosomal protein uL23 family. In terms of assembly, part of the 50S ribosomal subunit. Contacts protein L29, and trigger factor when it is bound to the ribosome.

Its function is as follows. One of the early assembly proteins it binds 23S rRNA. One of the proteins that surrounds the polypeptide exit tunnel on the outside of the ribosome. Forms the main docking site for trigger factor binding to the ribosome. In Dechloromonas aromatica (strain RCB), this protein is Large ribosomal subunit protein uL23.